Consider the following 715-residue polypeptide: Palmitoyltransferase ZDHHC5 (715 aa).

Residues 1–13 (MPAESGKRFKPSK) lie on the Cytoplasmic side of the membrane. The chain crosses the membrane as a helical span at residues 14 to 34 (YVPVSAAAIFLVGATTLFFAF). Residues 35 to 52 (TCPGLSLNVSPAVPIYNA) lie on the Extracellular side of the membrane. Residues 53 to 73 (IMFLFVLANFSMATFMDPGIF) traverse the membrane as a helical segment. Over 74-148 (PRAEEDEDKE…NCIGRRNYRY (75 aa)) the chain is Cytoplasmic. Tyr-91 is modified (phosphotyrosine). Residues 104–154 (KWCATCRFYRPPRCSHCSVCDNCVEEFDHHCPWVNNCIGRRNYRYFFLFLL) enclose the DHHC domain. Catalysis depends on Cys-134, which acts as the S-palmitoyl cysteine intermediate. A helical membrane pass occupies residues 149–169 (FFLFLLSLTAHIMGVFGFGLL). Residues 170 to 191 (YVLYHIEELSGVRTAVTMAVMC) are Extracellular-facing. Residues 192–212 (VAGLFFIPVAGLTGFHVVLVA) traverse the membrane as a helical segment. Topologically, residues 213–715 (RGRTTNEQVT…VGGTTYEISV (503 aa)) are cytoplasmic. Position 247 is a phosphoserine (Ser-247). The segment at 289–715 (GELRRTKSKG…VGGTTYEISV (427 aa)) is disordered. A Phosphothreonine modification is found at Thr-294. Residues Ser-296 and Ser-299 each carry the phosphoserine modification. At Thr-303 the chain carries Phosphothreonine. Ser-345 carries the post-translational modification Phosphoserine. Thr-348 and Thr-350 each carry phosphothreonine. Residues 359-373 (SSSSTSAAMPHSSSA) are compositionally biased toward low complexity. Ser-380, Ser-398, Ser-406, and Ser-409 each carry phosphoserine. Thr-411 bears the Phosphothreonine mark. Phosphoserine is present on residues Ser-415, Ser-425, Ser-429, and Ser-432. Positions 422–432 (SSGSRSSSLKS) are enriched in low complexity. Residue Thr-436 is modified to Phosphothreonine. Over residues 442-478 (QLQSIRSEGTTSTSYKSLANQTRNGSLSYDSLLTPSD) the composition is skewed to polar residues. A phosphoserine mark is found at Ser-529 and Ser-554. Residues 581–597 (PRTSSSSDDSKRSPLSK) are compositionally biased toward low complexity. At Arg-617 the chain carries Omega-N-methylarginine. Residue Ser-621 is modified to Phosphoserine. Thr-659 bears the Phosphothreonine mark. Residues 666–677 (LKTTYSKSNGQP) show a composition bias toward polar residues. Phosphoserine occurs at positions 684 and 694. Arg-697 bears the Omega-N-methylarginine mark.

It belongs to the DHHC palmitoyltransferase family. ERF2/ZDHHC9 subfamily. In terms of processing, phosphorylation regulates association with endocytic proteins and its subcellular localization. Phosphorylation by LYN during fatty acid uptake leads to inactivation of the activity. Autopalmitoylated. Palmitoylation of the C-terminal tail regulates stimulation-dependent plasma membrane motility. In terms of tissue distribution, highly enriched in brain, detectable in liver and heart, and undetectable in most other tissues.

It localises to the cell membrane. It catalyses the reaction L-cysteinyl-[protein] + hexadecanoyl-CoA = S-hexadecanoyl-L-cysteinyl-[protein] + CoA. Functionally, palmitoyltransferase that catalyzes the addition of palmitate onto various protein substrates such as CTNND2, CD36, GSDMD, NLRP3, NOD1, NOD2, STAT3 and S1PR1 thus plays a role in various biological processes including cell adhesion, inflammation, fatty acid uptake, bacterial sensing or cardiac functions. Plays an important role in the regulation of synapse efficacy by mediating palmitoylation of delta-catenin/CTNND2, thereby increasing synaptic delivery and surface stabilization of alpha-amino-3-hydroxy-5-methyl-4-isoxazole propionic acid receptors (AMPARs). Under basal conditions, remains at the synaptic membrane through FYN-mediated phosphorylation that prevents association with endocytic proteins. Neuronal activity enhances the internalization and trafficking of DHHC5 from spines to dendritic shafts where it palmitoylates delta-catenin/CTNND2. Regulates cell adhesion at the plasma membrane by palmitoylating GOLGA7B and DSG2. Plays a role in innate immune response by mediating the palmitoylation of NOD1 and NOD2 and their proper recruitment to the bacterial entry site and phagosomes. Also participates in fatty acid uptake by palmitoylating CD36 and thereby targeting it to the plasma membrane. Upon binding of fatty acids to CD36, gets phosphorylated by LYN leading to inactivation and subsequent CD36 caveolar endocytosis. Controls oligodendrocyte development by catalyzing STAT3 palmitoylation. Acts as a regulator of inflammatory response by mediating palmitoylation of NLRP3 and GSDMD. Palmitoylates NLRP3 to promote inflammasome assembly and activation. Activates pyroptosis by catalyzing palmitoylation of gasdermin-D (GSDMD), thereby promoting membrane translocation and pore formation of GSDMD. The protein is Palmitoyltransferase ZDHHC5 (Zdhhc5) of Mus musculus (Mouse).